Consider the following 623-residue polypeptide: Xaa-Pro aminopeptidase 1 (623 aa).

Residue arginine 77 participates in a peptide binding. Lysine 304 bears the N6-acetyllysine mark. Histidine 395 contacts a peptide. Aspartate 415, aspartate 426, and histidine 489 together coordinate Mn(2+). A peptide is bound by residues histidine 489, histidine 498, and glutamate 523. 2 residues coordinate Mn(2+): glutamate 523 and glutamate 537.

It belongs to the peptidase M24B family. As to quaternary structure, homodimer. It depends on Mn(2+) as a cofactor.

It localises to the cytoplasm. Its subcellular location is the cytosol. It carries out the reaction Release of any N-terminal amino acid, including proline, that is linked to proline, even from a dipeptide or tripeptide.. Metalloaminopeptidase that catalyzes the removal of a penultimate prolyl residue from the N-termini of peptides, such as Arg-Pro-Pro. Contributes to the degradation of bradykinin. This is Xaa-Pro aminopeptidase 1 (XPNPEP1) from Bos taurus (Bovine).